Here is a 596-residue protein sequence, read N- to C-terminus: Transcription factor EGL1 (596 aa).

The region spanning Glu401 to Leu450 is the bHLH domain.

Efficient DNA binding requires dimerization with another bHLH protein. Homodimer and heterodimer with GL3. Interacts with CPC, MYB0/GL1, MYB5, MYB23, MYB113, MYB114, MYB75/PAP1, MYB90/PAP2, TT2, TRY, TTG1 and MYB66/WER. Ubiquitous with higher levels in buds and flowers. Specifically localized in developing root hair cells. Expressed in epidermal root hair cells (trichoblasts) and moves to root hairless cells (atrichoblasts) by a cell-to-cell movement through plasmodesmata (at protein level).

It localises to the nucleus. Transcription activator, when associated with MYB75/PAP1, MYB90/PAP2 or TT2. Involved in epidermal cell fate specification. Negatively regulates stomata formation but promotes trichome formation. Together with MYB66/WER, promotes the formation of non-hair cells in root epidermis cells in the N position. Whereas together with CPC, promotes the formation of hair cells in root epidermis cells in the H position by inhibiting non-hair cell formation. Also seems to play a role in the activation of anthocyanin biosynthesis, probably together with MYB75/PAP1. Involved in seed mucilage production. Activates the transcription of GL2. The chain is Transcription factor EGL1 (BHLH2) from Arabidopsis thaliana (Mouse-ear cress).